Reading from the N-terminus, the 428-residue chain is Bacteriochlorophyll synthase 44.5 kDa chain (428 aa).

12 consecutive transmembrane segments (helical) span residues 3–23 (LGWL…AVVV), 32–52 (LMVV…ALHY), 73–93 (FFVI…AVAV), 115–135 (GFGV…ATEP), 144–164 (ITWL…GHFL), 172–192 (LLWI…LAVW), 225–245 (AFTF…LILE), 269–289 (GVFF…IGSL), 291–311 (GWVV…VALG), 317–337 (ALVP…VAAI), 358–378 (LWGA…AGAA), and 393–413 (LVFG…TGVV).

This sequence belongs to the PucC family.

It is found in the membrane. It functions in the pathway porphyrin-containing compound metabolism; bacteriochlorophyll biosynthesis (light-independent). In Rhodobacter capsulatus (strain ATCC BAA-309 / NBRC 16581 / SB1003), this protein is Bacteriochlorophyll synthase 44.5 kDa chain.